The primary structure comprises 187 residues: Probable chorismate pyruvate-lyase (187 aa).

The substrate site is built by Arg76, Leu114, and Glu173.

This sequence belongs to the UbiC family.

It is found in the cytoplasm. The enzyme catalyses chorismate = 4-hydroxybenzoate + pyruvate. Its pathway is cofactor biosynthesis; ubiquinone biosynthesis. Removes the pyruvyl group from chorismate, with concomitant aromatization of the ring, to provide 4-hydroxybenzoate (4HB) for the ubiquinone pathway. The protein is Probable chorismate pyruvate-lyase of Shewanella amazonensis (strain ATCC BAA-1098 / SB2B).